The sequence spans 339 residues: UDP-N-acetylglucosamine--N-acetylmuramyl-(pentapeptide) pyrophosphoryl-undecaprenol N-acetylglucosamine transferase (339 aa).

UDP-N-acetyl-alpha-D-glucosamine-binding positions include 11–13, N127, R170, S188, I235, and Q280; that span reads TGG.

The protein belongs to the glycosyltransferase 28 family. MurG subfamily.

It is found in the cell inner membrane. The enzyme catalyses di-trans,octa-cis-undecaprenyl diphospho-N-acetyl-alpha-D-muramoyl-L-alanyl-D-glutamyl-meso-2,6-diaminopimeloyl-D-alanyl-D-alanine + UDP-N-acetyl-alpha-D-glucosamine = di-trans,octa-cis-undecaprenyl diphospho-[N-acetyl-alpha-D-glucosaminyl-(1-&gt;4)]-N-acetyl-alpha-D-muramoyl-L-alanyl-D-glutamyl-meso-2,6-diaminopimeloyl-D-alanyl-D-alanine + UDP + H(+). It functions in the pathway cell wall biogenesis; peptidoglycan biosynthesis. Its function is as follows. Cell wall formation. Catalyzes the transfer of a GlcNAc subunit on undecaprenyl-pyrophosphoryl-MurNAc-pentapeptide (lipid intermediate I) to form undecaprenyl-pyrophosphoryl-MurNAc-(pentapeptide)GlcNAc (lipid intermediate II). The chain is UDP-N-acetylglucosamine--N-acetylmuramyl-(pentapeptide) pyrophosphoryl-undecaprenol N-acetylglucosamine transferase from Thermotoga neapolitana (strain ATCC 49049 / DSM 4359 / NBRC 107923 / NS-E).